We begin with the raw amino-acid sequence, 192 residues long: Acireductone dioxygenase 2 (192 aa).

His-99, His-101, Glu-105, and His-144 together coordinate Fe(2+). 4 residues coordinate Ni(2+): His-99, His-101, Glu-105, and His-144.

The protein belongs to the acireductone dioxygenase (ARD) family. The cofactor is Fe(2+). Ni(2+) serves as cofactor.

It is found in the cytoplasm. The protein localises to the nucleus. The enzyme catalyses 1,2-dihydroxy-5-(methylsulfanyl)pent-1-en-3-one + O2 = 4-methylsulfanyl-2-oxobutanoate + formate + 2 H(+). It carries out the reaction 1,2-dihydroxy-5-(methylsulfanyl)pent-1-en-3-one + O2 = 3-(methylsulfanyl)propanoate + CO + formate + 2 H(+). It participates in amino-acid biosynthesis; L-methionine biosynthesis via salvage pathway; L-methionine from S-methyl-5-thio-alpha-D-ribose 1-phosphate: step 5/6. Catalyzes 2 different reactions between oxygen and the acireductone 1,2-dihydroxy-3-keto-5-methylthiopentene (DHK-MTPene) depending upon the metal bound in the active site. Fe-containing acireductone dioxygenase (Fe-ARD) produces formate and 2-keto-4-methylthiobutyrate (KMTB), the alpha-ketoacid precursor of methionine in the methionine recycle pathway. Ni-containing acireductone dioxygenase (Ni-ARD) produces methylthiopropionate, carbon monoxide and formate, and does not lie on the methionine recycle pathway. The sequence is that of Acireductone dioxygenase 2 (ARD2) from Arabidopsis thaliana (Mouse-ear cress).